We begin with the raw amino-acid sequence, 192 residues long: Putative acetyltransferase YjbC (192 aa).

The 139-residue stretch at 1–139 (MNWYEKLSEY…MEILYWSPKT (139 aa)) folds into the N-acetyltransferase domain.

The protein localises to the cytoplasm. This is Putative acetyltransferase YjbC (yjbC) from Bacillus subtilis (strain 168).